A 605-amino-acid chain; its full sequence is Lysophospholipase 1 (605 aa).

A signal peptide spans 1-17 (MILHHLLILLIINYCVA). The 536-residue stretch at 30 to 565 (SCPSSQLIRS…ENYCWDGTIY (536 aa)) folds into the PLA2c domain. Asn199, Asn261, Asn399, Asn451, Asn465, Asn492, and Asn573 each carry an N-linked (GlcNAc...) asparagine glycan.

It belongs to the lysophospholipase family.

The protein localises to the secreted. The enzyme catalyses a 1-acyl-sn-glycero-3-phosphocholine + H2O = sn-glycerol 3-phosphocholine + a fatty acid + H(+). In terms of biological role, catalyzes the release of fatty acids from lysophospholipids. Phospholipase B may well contribute to pathogenicity by abetting the fungus in damaging and traversing host cell membranes, processes which likely increase the rapidity of disseminated infection. This is Lysophospholipase 1 from Candida albicans (strain SC5314 / ATCC MYA-2876) (Yeast).